The primary structure comprises 652 residues: tRNA-guanine(15) transglycosylase (652 aa).

Asp88 acts as the Nucleophile in catalysis. Residues Asp123 and Ala194 each coordinate substrate. Zn(2+)-binding residues include Cys280, Cys282, and Cys285. Residues 577 to 652 (KYRVVIDSEV…AAVSVRSGFK (76 aa)) enclose the PUA domain.

The protein belongs to the archaeosine tRNA-ribosyltransferase family. Zn(2+) is required as a cofactor.

The catalysed reaction is guanosine(15) in tRNA + 7-cyano-7-deazaguanine = 7-cyano-7-carbaguanosine(15) in tRNA + guanine. The protein operates within tRNA modification; archaeosine-tRNA biosynthesis. Functionally, exchanges the guanine residue with 7-cyano-7-deazaguanine (preQ0) at position 15 in the dihydrouridine loop (D-loop) of archaeal tRNAs. The sequence is that of tRNA-guanine(15) transglycosylase from Methanococcus aeolicus (strain ATCC BAA-1280 / DSM 17508 / OCM 812 / Nankai-3).